We begin with the raw amino-acid sequence, 638 residues long: Methyl-accepting chemotaxis protein McpQ (638 aa).

The helical transmembrane segment at 18–38 (LGLGFGLVLLLTLAITLTGWH) threads the bilayer. Residues 45 to 282 (DRGDKLGNIS…SQTEVRDAAA (238 aa)) enclose the HBM domain. The helical transmembrane segment at 287–307 (TLLTVATVLALALGLLAAWAI) threads the bilayer. An HAMP domain is found at 309–361 (RQIIIPLRQTLRAAERVASGDLTQSLQVQRRDELGQLQASMHRMTQGLRELIG). In terms of domain architecture, Methyl-accepting transducer spans 366 to 602 (GVTQIASAAE…EINRSVMNVR (237 aa)).

It belongs to the methyl-accepting chemotaxis (MCP) protein family.

Its subcellular location is the cell membrane. In terms of biological role, chemotactic-signal transducers respond to changes in the concentration of attractants and repellents in the environment, transduce a signal from the outside to the inside of the cell, and facilitate sensory adaptation through the variation of the level of methylation. McpQ recognizes specifically citrate and citrate/metal(2+) complexes. Binds citrate/metal(2+) complexes with higher affinity than free citrate, and mediates preferentially chemotaxis toward citrate/metal(2+) complexes. The sequence is that of Methyl-accepting chemotaxis protein McpQ from Pseudomonas putida (strain ATCC 47054 / DSM 6125 / CFBP 8728 / NCIMB 11950 / KT2440).